Here is a 191-residue protein sequence, read N- to C-terminus: MDDGLRDRPGVTSRFFHSLEVKYQYYLDRLTPHTAFRWVIALISLVFFASRIILLQGFYIVAYAVGIYYLNLFLLFLTPSIDPALEFEDEDDGPVLPSKTNDEFRPFMRRLPEFKFWHSFMKATLIAITCTFFEFFDVPVFWPILVMYFFILTFLTLKRQIMHMIKYRYIPFTVGKPRMAGKEDTGKVVVG.

3 consecutive transmembrane segments (helical) span residues 35-55 (AFRW…IILL), 57-77 (GFYI…LLFL), and 135-155 (FFDV…LTFL).

It belongs to the RER1 family.

The protein resides in the membrane. Functionally, may be involved in protein transport along the secretory pathway. This Caenorhabditis elegans protein is Protein RER1 homolog (rer-1).